A 488-amino-acid polypeptide reads, in one-letter code: Cytochrome P450 71A24 (488 aa).

The helical transmembrane segment at 3–23 (MMMMIILLLCSIILITILFFK) threads the bilayer. Position 433 (Cys-433) interacts with heme.

Belongs to the cytochrome P450 family. Heme serves as cofactor.

The protein resides in the membrane. This is Cytochrome P450 71A24 (CYP71A24) from Arabidopsis thaliana (Mouse-ear cress).